The following is a 359-amino-acid chain: Agropine synthesis conjugase (359 aa).

Residues 28 to 171 (TVAKFGRATA…IGGILNEREN (144 aa)) form the SIS domain.

This chain is Agropine synthesis conjugase (mas2), found in Rhizobium rhizogenes (Agrobacterium rhizogenes).